Here is a 398-residue protein sequence, read N- to C-terminus: Histidinol dehydrogenase (398 aa).

Tyr-114, Gln-176, and Asn-199 together coordinate NAD(+). Residues Thr-222, Gln-244, and His-247 each contribute to the substrate site. Zn(2+) is bound by residues Gln-244 and His-247. Residues Glu-298 and His-299 each act as proton acceptor in the active site. Residues His-299, Asp-331, Glu-384, and His-389 each contribute to the substrate site. Zn(2+) is bound at residue Asp-331. His-389 contacts Zn(2+).

Belongs to the histidinol dehydrogenase family. Zn(2+) serves as cofactor.

The enzyme catalyses L-histidinol + 2 NAD(+) + H2O = L-histidine + 2 NADH + 3 H(+). It participates in amino-acid biosynthesis; L-histidine biosynthesis; L-histidine from 5-phospho-alpha-D-ribose 1-diphosphate: step 9/9. In terms of biological role, catalyzes the sequential NAD-dependent oxidations of L-histidinol to L-histidinaldehyde and then to L-histidine. The sequence is that of Histidinol dehydrogenase (hisD) from Saccharolobus solfataricus (strain ATCC 35092 / DSM 1617 / JCM 11322 / P2) (Sulfolobus solfataricus).